The primary structure comprises 207 residues: Urease accessory protein UreG (207 aa).

12–19 (GPVGAGKT) lines the GTP pocket.

Belongs to the SIMIBI class G3E GTPase family. UreG subfamily. In terms of assembly, homodimer. UreD, UreF and UreG form a complex that acts as a GTP-hydrolysis-dependent molecular chaperone, activating the urease apoprotein by helping to assemble the nickel containing metallocenter of UreC. The UreE protein probably delivers the nickel.

The protein localises to the cytoplasm. Facilitates the functional incorporation of the urease nickel metallocenter. This process requires GTP hydrolysis, probably effectuated by UreG. The chain is Urease accessory protein UreG from Cereibacter sphaeroides (strain ATCC 17025 / ATH 2.4.3) (Rhodobacter sphaeroides).